The primary structure comprises 318 residues: Ribonuclease Z (318 aa).

Zn(2+)-binding residues include His-63, His-65, Asp-67, His-68, His-142, Asp-213, and His-273. Asp-67 functions as the Proton acceptor in the catalytic mechanism.

The protein belongs to the RNase Z family. As to quaternary structure, homodimer. Zn(2+) serves as cofactor.

The enzyme catalyses Endonucleolytic cleavage of RNA, removing extra 3' nucleotides from tRNA precursor, generating 3' termini of tRNAs. A 3'-hydroxy group is left at the tRNA terminus and a 5'-phosphoryl group is left at the trailer molecule.. Its function is as follows. Zinc phosphodiesterase, which displays some tRNA 3'-processing endonuclease activity. Probably involved in tRNA maturation, by removing a 3'-trailer from precursor tRNA. In Leuconostoc mesenteroides subsp. mesenteroides (strain ATCC 8293 / DSM 20343 / BCRC 11652 / CCM 1803 / JCM 6124 / NCDO 523 / NBRC 100496 / NCIMB 8023 / NCTC 12954 / NRRL B-1118 / 37Y), this protein is Ribonuclease Z.